The sequence spans 100 residues: uncharacterized protein (100 aa).

The protein resides in the mitochondrion. This is an uncharacterized protein from Arabidopsis thaliana (Mouse-ear cress).